Here is a 498-residue protein sequence, read N- to C-terminus: L-proline--[L-prolyl-carrier protein] ligase (498 aa).

This sequence belongs to the ATP-dependent AMP-binding enzyme family.

It catalyses the reaction holo-[peptidyl-carrier protein] + L-proline + ATP = L-prolyl-[peptidyl-carrier protein] + AMP + diphosphate. Functionally, involved in the biosynthesis of pyoluteorin. Catalyzes the conversion of L-proline to L-prolyl-AMP and the transfer of the L-prolyl group to acyl carrier protein PltL. The sequence is that of L-proline--[L-prolyl-carrier protein] ligase from Pseudomonas fluorescens (strain ATCC BAA-477 / NRRL B-23932 / Pf-5).